Reading from the N-terminus, the 408-residue chain is Argininosuccinate synthase (408 aa).

ATP contacts are provided by residues alanine 11 to serine 19 and alanine 38. Residues tyrosine 91 and serine 96 each contribute to the L-citrulline site. Glycine 121 lines the ATP pocket. L-aspartate contacts are provided by threonine 123, asparagine 127, and aspartate 128. An L-citrulline-binding site is contributed by asparagine 127. 5 residues coordinate L-citrulline: arginine 131, serine 182, serine 191, glutamate 267, and tyrosine 279.

Belongs to the argininosuccinate synthase family. Type 1 subfamily. In terms of assembly, homotetramer.

Its subcellular location is the cytoplasm. It catalyses the reaction L-citrulline + L-aspartate + ATP = 2-(N(omega)-L-arginino)succinate + AMP + diphosphate + H(+). It participates in amino-acid biosynthesis; L-arginine biosynthesis; L-arginine from L-ornithine and carbamoyl phosphate: step 2/3. In Zymomonas mobilis subsp. mobilis (strain ATCC 31821 / ZM4 / CP4), this protein is Argininosuccinate synthase.